Here is a 609-residue protein sequence, read N- to C-terminus: MNNNFDAIVIGAGHAGVEAAFALAKSNNKVALITFDLSKITMMPCNPSIGGPAKGIITREIDALGGIQGYYSDLAMIQIKMLNDSKGPAVRAIRAQIDKEKYSKLIREDLQKNSNITLIEAGVYEIKADKKVFKSVVLSTGEEIFAKVCVLTTGTYMNSQILRGSSVTVSGPDGQKTTNKISESLKKLGFELQRFKTGTPARIYKSSIDFSKVEKEILDTNDLNFSNRSNKKLNQQVSCYLTYTNEKTHEIILNNLDKSSMYSGLIKGTGPRYCPSIEDKVVRFSDRNRHQVFFEPETLDETIIYLNGLSTSMPEDIQMQFLKTIPGLENLKIQKYGYAIEYDALNSLDLKHSLETKVIKNFFAAGQINGTSGYEEAAAQGLIAGINAALKLKNKKPLVLKRSDAYIGVLIDDLVIKGTKEPYRMLTSRAEYRLLLRHDNSDYRLSKYGYKLGLISKDEYSQIQKKYKNINSKINYLSKKYLSTNSNIAKKYNIKEATSYLKLLLRPEINPKDILKNYKYQNELLIKIKLEGYIKKQKQDASRMKNLEKIKIPNNINYDKVLNLASEAKDKLKIIKPETIAQAYRISGINPSDIQMLIFHLKTYKKYDN.

Residues 11–16 (GAGHAG), valine 123, and threonine 178 contribute to the FAD site. Residue 270–284 (GPRYCPSIEDKVVRF) coordinates NAD(+). Glutamine 367 serves as a coordination point for FAD.

This sequence belongs to the MnmG family. Homodimer. Heterotetramer of two MnmE and two MnmG subunits. FAD is required as a cofactor.

The protein localises to the cytoplasm. In terms of biological role, NAD-binding protein involved in the addition of a carboxymethylaminomethyl (cmnm) group at the wobble position (U34) of certain tRNAs, forming tRNA-cmnm(5)s(2)U34. In Mycoplasmopsis synoviae (strain 53) (Mycoplasma synoviae), this protein is tRNA uridine 5-carboxymethylaminomethyl modification enzyme MnmG.